A 197-amino-acid chain; its full sequence is TM2 domain-containing protein 1 (197 aa).

The N-terminal stretch at 1-32 is a signal peptide; sequence MAFRWRSLMRFRSTTRLLLLFTFCLTVIHSLG. Topologically, residues 33–105 are extracellular; that stretch reads NDVDSCDKLH…GFNKTIPCRN (73 aa). Residues Asn-77, Asn-84, Asn-98, and Asn-105 are each glycosylated (N-linked (GlcNAc...) asparagine). Residues 106 to 126 form a helical membrane-spanning segment; it reads VSGYSYKVAVALSLFLGWIGA. Residues 108–155 enclose the TM2 domain; that stretch reads GYSYKVAVALSLFLGWIGADRFYLGYPALGLLKFCTVGFCGIGSLVDF. Over 127 to 143 the chain is Cytoplasmic; it reads DRFYLGYPALGLLKFCT. A helical transmembrane segment spans residues 144–164; the sequence is VGFCGIGSLVDFMLISMQIVG. The Extracellular segment spans residues 165-197; it reads PSDGSDYIVDYYGARLTRLSITNETYRRMQPSP. N-linked (GlcNAc...) asparagine glycosylation is present at Asn-187.

It belongs to the TM2 family.

It localises to the membrane. In Danio rerio (Zebrafish), this protein is TM2 domain-containing protein 1 (tm2d1).